A 475-amino-acid polypeptide reads, in one-letter code: Ribulose bisphosphate carboxylase large chain (475 aa).

The propeptide occupies 1-2 (MS). Pro-3 is modified (N-acetylproline). The residue at position 14 (Lys-14) is an N6,N6,N6-trimethyllysine. Substrate is bound by residues Asn-123 and Thr-173. The active-site Proton acceptor is Lys-175. Lys-177 is a substrate binding site. Mg(2+) contacts are provided by Lys-201, Asp-203, and Glu-204. Position 201 is an N6-carboxylysine (Lys-201). His-294 functions as the Proton acceptor in the catalytic mechanism. Positions 295, 327, and 379 each coordinate substrate.

This sequence belongs to the RuBisCO large chain family. Type I subfamily. Heterohexadecamer of 8 large chains and 8 small chains; disulfide-linked. The disulfide link is formed within the large subunit homodimers. The cofactor is Mg(2+). Post-translationally, the disulfide bond which can form in the large chain dimeric partners within the hexadecamer appears to be associated with oxidative stress and protein turnover.

Its subcellular location is the plastid. The protein localises to the chloroplast. It catalyses the reaction 2 (2R)-3-phosphoglycerate + 2 H(+) = D-ribulose 1,5-bisphosphate + CO2 + H2O. The enzyme catalyses D-ribulose 1,5-bisphosphate + O2 = 2-phosphoglycolate + (2R)-3-phosphoglycerate + 2 H(+). RuBisCO catalyzes two reactions: the carboxylation of D-ribulose 1,5-bisphosphate, the primary event in carbon dioxide fixation, as well as the oxidative fragmentation of the pentose substrate in the photorespiration process. Both reactions occur simultaneously and in competition at the same active site. The polypeptide is Ribulose bisphosphate carboxylase large chain (Lotus japonicus (Lotus corniculatus var. japonicus)).